Reading from the N-terminus, the 674-residue chain is DNA mismatch repair protein MutL (674 aa).

It belongs to the DNA mismatch repair MutL/HexB family.

This protein is involved in the repair of mismatches in DNA. It is required for dam-dependent methyl-directed DNA mismatch repair. May act as a 'molecular matchmaker', a protein that promotes the formation of a stable complex between two or more DNA-binding proteins in an ATP-dependent manner without itself being part of a final effector complex. In Clostridium perfringens (strain 13 / Type A), this protein is DNA mismatch repair protein MutL.